A 438-amino-acid polypeptide reads, in one-letter code: Probable phosphoglucosamine mutase (438 aa).

The active-site Phosphoserine intermediate is the serine 91. Mg(2+) is bound by residues serine 91, aspartate 228, aspartate 230, and aspartate 232. Serine 91 is subject to Phosphoserine.

This sequence belongs to the phosphohexose mutase family. Requires Mg(2+) as cofactor. Post-translationally, activated by phosphorylation.

The catalysed reaction is alpha-D-glucosamine 1-phosphate = D-glucosamine 6-phosphate. In terms of biological role, catalyzes the conversion of glucosamine-6-phosphate to glucosamine-1-phosphate. This chain is Probable phosphoglucosamine mutase, found in Methanocella arvoryzae (strain DSM 22066 / NBRC 105507 / MRE50).